The chain runs to 228 residues: Upstream activation factor subunit UAF30 (228 aa).

Residues 1 to 56 (MAELNDYSTMIDILLSDMDLETVTTKKVRMALKEVYAIDVESQGKAINKLIRKHLD) enclose the DEK-C domain. Basic and acidic residues predominate over residues 89 to 111 (SKRSSGEEKNDSETKGTHVEKKK). Positions 89 to 118 (SKRSSGEEKNDSETKGTHVEKKKGTVSKSP) are disordered. The 77-residue stretch at 119–195 (ISTRKVTLSK…HKILASHMTE (77 aa)) folds into the SWIB/MDM2 domain. The interval 209–228 (VRRKEKPIVSDSEQSDTKGI) is disordered. Residues S218, S220, and S223 each carry the phosphoserine modification.

As to quaternary structure, component of the UAF (upstream activation factor) complex which consists of UAF30, RRN5, RRN9, RRN10, and histones H3 and H4.

It is found in the nucleus. The protein resides in the nucleolus. In terms of biological role, nonessential component of the UAF (upstream activation factor) complex which interacts with the upstream element of the RNA polymerase I promoter and forms a stable preinitiation complex. Together with SPT15/TBP UAF seems to stimulate basal transcription to a fully activated level. UAF30 seems to play a role in silencing transcription by RNA polymerase II. The protein is Upstream activation factor subunit UAF30 (UAF30) of Saccharomyces cerevisiae (strain ATCC 204508 / S288c) (Baker's yeast).